Here is a 140-residue protein sequence, read N- to C-terminus: Small ribosomal subunit protein uS12 (140 aa).

Positions 33-55 (KEQTNVSSPQKRGVCTRVGTMTP) are disordered.

It belongs to the universal ribosomal protein uS12 family. In terms of assembly, part of the 30S ribosomal subunit. Contacts proteins S8 and S17. May interact with IF1 in the 30S initiation complex.

With S4 and S5 plays an important role in translational accuracy. In terms of biological role, interacts with and stabilizes bases of the 16S rRNA that are involved in tRNA selection in the A site and with the mRNA backbone. Located at the interface of the 30S and 50S subunits, it traverses the body of the 30S subunit contacting proteins on the other side and probably holding the rRNA structure together. The combined cluster of proteins S8, S12 and S17 appears to hold together the shoulder and platform of the 30S subunit. The chain is Small ribosomal subunit protein uS12 from Geobacillus kaustophilus (strain HTA426).